A 303-amino-acid chain; its full sequence is Recombination-associated protein RdgC (303 aa).

This sequence belongs to the RdgC family.

Its subcellular location is the cytoplasm. It localises to the nucleoid. May be involved in recombination. The chain is Recombination-associated protein RdgC from Shewanella loihica (strain ATCC BAA-1088 / PV-4).